The chain runs to 439 residues: Adenylosuccinate synthetase (439 aa).

GTP-binding positions include 13-19 (GDEGKGK) and 41-43 (GHT). Aspartate 14 acts as the Proton acceptor in catalysis. The Mg(2+) site is built by aspartate 14 and glycine 41. Residues 14–17 (DEGK), 39–42 (NAGH), threonine 130, arginine 144, glutamine 226, threonine 241, and arginine 313 contribute to the IMP site. The active-site Proton donor is histidine 42. Residue 309-315 (ASTGRQR) participates in substrate binding. GTP is bound by residues arginine 315, 341–343 (KLD), and 422–424 (STG).

It belongs to the adenylosuccinate synthetase family. In terms of assembly, homodimer. The cofactor is Mg(2+).

Its subcellular location is the cytoplasm. The catalysed reaction is IMP + L-aspartate + GTP = N(6)-(1,2-dicarboxyethyl)-AMP + GDP + phosphate + 2 H(+). Its pathway is purine metabolism; AMP biosynthesis via de novo pathway; AMP from IMP: step 1/2. Plays an important role in the de novo pathway of purine nucleotide biosynthesis. Catalyzes the first committed step in the biosynthesis of AMP from IMP. This Acinetobacter baylyi (strain ATCC 33305 / BD413 / ADP1) protein is Adenylosuccinate synthetase.